Reading from the N-terminus, the 729-residue chain is Fatty acid oxidation complex subunit alpha (729 aa).

The segment at 1-189 (MLYKGDTLYL…KIGLVDGVVK (189 aa)) is enoyl-CoA hydratase/isomerase. D296 is a substrate binding site. Residues 311–729 (ETPKHAAVLG…ARPVGELKTA (419 aa)) are 3-hydroxyacyl-CoA dehydrogenase. NAD(+)-binding positions include M324, D343, 400-402 (VVE), K407, and S429. H450 (for 3-hydroxyacyl-CoA dehydrogenase activity) is an active-site residue. N453 provides a ligand contact to NAD(+). Residues N500 and Y660 each coordinate substrate.

The protein in the N-terminal section; belongs to the enoyl-CoA hydratase/isomerase family. It in the C-terminal section; belongs to the 3-hydroxyacyl-CoA dehydrogenase family. In terms of assembly, heterotetramer of two alpha chains (FadB) and two beta chains (FadA).

It carries out the reaction a (3S)-3-hydroxyacyl-CoA + NAD(+) = a 3-oxoacyl-CoA + NADH + H(+). The catalysed reaction is a (3S)-3-hydroxyacyl-CoA = a (2E)-enoyl-CoA + H2O. It catalyses the reaction a 4-saturated-(3S)-3-hydroxyacyl-CoA = a (3E)-enoyl-CoA + H2O. The enzyme catalyses (3S)-3-hydroxybutanoyl-CoA = (3R)-3-hydroxybutanoyl-CoA. It carries out the reaction a (3Z)-enoyl-CoA = a 4-saturated (2E)-enoyl-CoA. The catalysed reaction is a (3E)-enoyl-CoA = a 4-saturated (2E)-enoyl-CoA. Its pathway is lipid metabolism; fatty acid beta-oxidation. Its function is as follows. Involved in the aerobic and anaerobic degradation of long-chain fatty acids via beta-oxidation cycle. Catalyzes the formation of 3-oxoacyl-CoA from enoyl-CoA via L-3-hydroxyacyl-CoA. It can also use D-3-hydroxyacyl-CoA and cis-3-enoyl-CoA as substrate. This chain is Fatty acid oxidation complex subunit alpha, found in Enterobacter cloacae.